The sequence spans 166 residues: Thioredoxin, mitochondrial (166 aa).

The transit peptide at 1–59 (MAQRLLLRRFLTSVISRKPPQGVWASLTSTSLQTPPYNAGGLTGTPSPARTFHTTRVCS) directs the protein to the mitochondrion. The Thioredoxin domain occupies 61 to 166 (TFNVQDGPDF…LEAFLKKLIG (106 aa)). Active-site nucleophile residues include Cys-90 and Cys-93. The cysteines at positions 90 and 93 are disulfide-linked. At Lys-152 the chain carries N6-acetyllysine; alternate. At Lys-152 the chain carries N6-succinyllysine; alternate.

It belongs to the thioredoxin family. As to quaternary structure, monomer. In terms of tissue distribution, expressed in several tissues with the highest expression levels in heart, muscle, kidney and adrenal gland.

It is found in the mitochondrion. In terms of biological role, important for the control of mitochondrial reactive oxygen species homeostasis, apoptosis regulation and cell viability. Is involved in various redox reactions including the reduction of protein disulfide bonds, through the reversible oxidation of its active center dithiol to a disulfide. This Rattus norvegicus (Rat) protein is Thioredoxin, mitochondrial (Txn2).